The primary structure comprises 98 residues: Gas vesicle protein A (98 aa).

Belongs to the gas vesicle GvpA family. In terms of assembly, the gas vesicle shell is 2 nm thick and consists of a single layer of this protein. It forms helical ribs nearly perpendicular to the long axis of the vesicle.

It localises to the gas vesicle shell. In terms of biological role, gas vesicles are hollow, gas filled proteinaceous nanostructures found in some microorganisms. During planktonic growth they allow positioning of the organism at a favorable depth for light or nutrient acquisition. GvpA forms the protein shell. The protein is Gas vesicle protein A of Koribacter versatilis (strain Ellin345).